The following is a 424-amino-acid chain: Phosphomethylpyrimidine synthase (424 aa).

Substrate contacts are provided by residues Asn-66, Met-95, Tyr-124, His-163, 185–187 (SRG), 226–229 (DGMR), and Glu-265. Residue His-269 coordinates Zn(2+). Substrate is bound at residue Phe-292. His-333 provides a ligand contact to Zn(2+). Residues Cys-408, Cys-411, and Cys-415 each coordinate [4Fe-4S] cluster.

This sequence belongs to the ThiC family. The cofactor is [4Fe-4S] cluster.

It catalyses the reaction 5-amino-1-(5-phospho-beta-D-ribosyl)imidazole + S-adenosyl-L-methionine = 4-amino-2-methyl-5-(phosphooxymethyl)pyrimidine + CO + 5'-deoxyadenosine + formate + L-methionine + 3 H(+). It participates in cofactor biosynthesis; thiamine diphosphate biosynthesis. Catalyzes the synthesis of the hydroxymethylpyrimidine phosphate (HMP-P) moiety of thiamine from aminoimidazole ribotide (AIR) in a radical S-adenosyl-L-methionine (SAM)-dependent reaction. This is Phosphomethylpyrimidine synthase from Thermotoga neapolitana (strain ATCC 49049 / DSM 4359 / NBRC 107923 / NS-E).